Here is a 145-residue protein sequence, read N- to C-terminus: Extracellular globin-2 (145 aa).

Positions 3-145 constitute a Globin domain; it reads QCGVLEGLKV…HIEDGIKGHH (143 aa). Cys-4 and Cys-133 are disulfide-bonded. His-96 is a heme b binding site.

This sequence belongs to the globin family. As to quaternary structure, the extracellular hemoglobin of the earthworm consists of 12 subunits that have a hexagonal bilayer structure with a molecular weight near 3.8 million. Each one-twelfth subunit is composed primarily of disulfide linked trimers (chains A, B, and C) and monomers (chain D).

The sequence is that of Extracellular globin-2 from Lumbricus terrestris (Common earthworm).